Reading from the N-terminus, the 275-residue chain is T-cell ecto-ADP-ribosyltransferase 2 (275 aa).

Positions 1–20 (MPSNICKFFLTWWLIQQVTG) are cleaved as a signal peptide. 2 disulfides stabilise this stretch: C41–C243 and C141–C193. The TR mART core domain occupies 61–238 (AKLKVAWEEA…IFLDSPKRKK (178 aa)). Y98, R146, and Q164 together coordinate NAD(+). Residue R146 is part of the active site. S167 is an active-site residue. S202 serves as a coordination point for NAD(+). The residue at position 204 (R204) is an ADP-ribosylarginine; by autocatalysis. E209 is a catalytic residue. S246 carries GPI-anchor amidated serine lipidation. Positions 247 to 275 (SAGARESCVSLFLVVLPSLLVQLLCLAEP) are cleaved as a propeptide — removed in mature form.

This sequence belongs to the Arg-specific ADP-ribosyltransferase family. As to expression, postthymic T-cells.

The protein localises to the cell membrane. The enzyme catalyses L-arginyl-[protein] + NAD(+) = N(omega)-(ADP-D-ribosyl)-L-arginyl-[protein] + nicotinamide + H(+). It catalyses the reaction NAD(+) + H2O = ADP-D-ribose + nicotinamide + H(+). Its function is as follows. Has both NAD(+) glycohydrolase and ADP-ribosyltransferase activity (to a lesser extent). The chain is T-cell ecto-ADP-ribosyltransferase 2 (Art2b) from Rattus norvegicus (Rat).